The chain runs to 280 residues: 3-dehydroshikimate dehydratase (280 aa).

Substrate is bound by residues tyrosine 70, arginine 102, and glutamate 142. Residue glutamate 142 coordinates Mn(2+). The active-site Proton acceptor is the histidine 144. 2 residues coordinate substrate: aspartate 172 and histidine 175. Aspartate 172 is a binding site for Mn(2+). Histidine 198 contributes to the Mn(2+) binding site. Substrate-binding residues include tyrosine 217 and glutamate 253. Glutamate 253 serves as a coordination point for Mn(2+).

As to quaternary structure, homodimer. It depends on Mn(2+) as a cofactor.

The catalysed reaction is 3-dehydroshikimate = 3,4-dihydroxybenzoate + H2O. Its pathway is aromatic compound metabolism; 3,4-dihydroxybenzoate biosynthesis; 3,4-dihydroxybenzoate from 3-dehydroquinate: step 2/2. The protein operates within siderophore biosynthesis; petrobactin biosynthesis. Its function is as follows. Involved in the biosynthesis of petrobactin, a catecholate siderophore that functions in both iron acquisition and virulence. Catalyzes the conversion of 3-dehydroshikimate to 3,4-dihydroxybenzoate (3,4-DHBA). The sequence is that of 3-dehydroshikimate dehydratase from Bacillus anthracis.